A 106-amino-acid polypeptide reads, in one-letter code: RNA-binding protein Hfq (106 aa).

A Sm domain is found at 9-68 (DPYLNALRKERVPVSIYLVNGIKLQGQIESFDAFVILLRNNISQMVYKHAVSTIVPSRNI). The disordered stretch occupies residues 78 to 106 (EDEAGEEISAEYTPNAEGQAEATADPLYD).

The protein belongs to the Hfq family. In terms of assembly, homohexamer.

In terms of biological role, RNA chaperone that binds small regulatory RNA (sRNAs) and mRNAs to facilitate mRNA translational regulation in response to envelope stress, environmental stress and changes in metabolite concentrations. Also binds with high specificity to tRNAs. The chain is RNA-binding protein Hfq from Dichelobacter nodosus (strain VCS1703A).